The following is a 378-amino-acid chain: Alcohol dehydrogenase (378 aa).

Fe cation-binding residues include aspartate 195, histidine 199, histidine 262, and histidine 274.

This sequence belongs to the iron-containing alcohol dehydrogenase family. The cofactor is Fe(2+). Requires Mn(2+) as cofactor.

It carries out the reaction a primary alcohol + NAD(+) = an aldehyde + NADH + H(+). The catalysed reaction is butan-1-ol + NAD(+) = butanal + NADH + H(+). It catalyses the reaction hexan-1-ol + NAD(+) = hexanal + NADH + H(+). The enzyme catalyses ethanol + NAD(+) = acetaldehyde + NADH + H(+). Thermostable type III alcohol dehydrogenase. For oxidation activity, the best substrates are 1-butanol and 1-hexanol, followed by ethanol. Shows lower activity with ethylene glycol, isopentanol, isopropanol and glycerol. Displays higher reduction activity in the presence of butanal, followed by acetaldehyde. Has lower activity with hexanal and acetone. The chain is Alcohol dehydrogenase from Thermococcus barophilus.